Here is a 478-residue protein sequence, read N- to C-terminus: Putative sulfate transporter YbaR (478 aa).

12 helical membrane passes run 19–39 (ILAG…FSII), 42–62 (VDPM…SIFG), 65–85 (PGMI…LVAD), 87–107 (GLQY…ILGI), 121–141 (VMIG…LPQF), 143–163 (GASW…YVLP), 168–188 (AVPS…TFHV), 220–240 (IIFP…LLTA), 259–279 (GQGI…CAMI), 295–315 (SAFV…HVVV), 345–365 (APLT…VTDD), and 366–386 (LSKG…AKIS). The 90-residue stretch at 389 to 478 (KIVSHAEDQK…ASKSLMKQMA (90 aa)) folds into the STAS domain.

Belongs to the SLC26A/SulP transporter (TC 2.A.53) family.

It localises to the cell membrane. The chain is Putative sulfate transporter YbaR (ybaR) from Bacillus subtilis (strain 168).